Reading from the N-terminus, the 77-residue chain is Acyl carrier protein (77 aa).

One can recognise a Carrier domain in the interval 1–76 (MENFDKVKDI…DAVKYINSLE (76 aa)). Serine 36 carries the O-(pantetheine 4'-phosphoryl)serine modification.

The protein belongs to the acyl carrier protein (ACP) family. In terms of processing, 4'-phosphopantetheine is transferred from CoA to a specific serine of apo-ACP by AcpS. This modification is essential for activity because fatty acids are bound in thioester linkage to the sulfhydryl of the prosthetic group.

It is found in the cytoplasm. It functions in the pathway lipid metabolism; fatty acid biosynthesis. Functionally, carrier of the growing fatty acid chain in fatty acid biosynthesis. In Staphylococcus epidermidis (strain ATCC 12228 / FDA PCI 1200), this protein is Acyl carrier protein.